The sequence spans 328 residues: Phosphate acyltransferase (328 aa).

It belongs to the PlsX family. In terms of assembly, homodimer. Probably interacts with PlsY.

The protein localises to the cytoplasm. The enzyme catalyses a fatty acyl-[ACP] + phosphate = an acyl phosphate + holo-[ACP]. Its pathway is lipid metabolism; phospholipid metabolism. Catalyzes the reversible formation of acyl-phosphate (acyl-PO(4)) from acyl-[acyl-carrier-protein] (acyl-ACP). This enzyme utilizes acyl-ACP as fatty acyl donor, but not acyl-CoA. The protein is Phosphate acyltransferase of Staphylococcus aureus (strain bovine RF122 / ET3-1).